Here is a 364-residue protein sequence, read N- to C-terminus: 3-isopropylmalate dehydrogenase (364 aa).

79–92 provides a ligand contact to NAD(+); it reads GPKWNNINETSRPE. Positions 100, 110, 139, and 228 each coordinate substrate. Mg(2+)-binding residues include Asp228, Asp252, and Asp256. Residue 286–298 participates in NAD(+) binding; it reads GSAPDIAGKNIAN.

The protein belongs to the isocitrate and isopropylmalate dehydrogenases family. LeuB type 1 subfamily. In terms of assembly, homodimer. Mg(2+) is required as a cofactor. Mn(2+) serves as cofactor.

The protein resides in the cytoplasm. It catalyses the reaction (2R,3S)-3-isopropylmalate + NAD(+) = 4-methyl-2-oxopentanoate + CO2 + NADH. It functions in the pathway amino-acid biosynthesis; L-leucine biosynthesis; L-leucine from 3-methyl-2-oxobutanoate: step 3/4. In terms of biological role, catalyzes the oxidation of 3-carboxy-2-hydroxy-4-methylpentanoate (3-isopropylmalate) to 3-carboxy-4-methyl-2-oxopentanoate. The product decarboxylates to 4-methyl-2 oxopentanoate. The protein is 3-isopropylmalate dehydrogenase of Blochmanniella floridana.